Consider the following 728-residue polypeptide: MSNHIDRDVINALIAGHFADPFSVLGMHRTDAGLEVRALLPDATDVWVIEPKTGRKVGKLECLDSRGFFSGVLPRRKNAFRYQLAVTWHGQQNLIDDPYRFGPLLQDLDVWLLSEGTHLRPYETLGAHAATMDGVTGTRFSVWAPNARRVSVVGQFNYWDGRRHPMRFRKESGIWELFVPGAHNGQLYKFELIDAHGNLRVKADPYAFESQMRPESASLICDLPPKVEQPADRRAANQFDAPISIYEVHLGSWRRHTDNNFWLSYRELADQLVPYAKWMGFTHLELLPVNEHPFDGSWGYQPTGLYAPTRRFGTRDDFRYFINAAHAAGLNVILDWVPGHFPADDFALASFDGTSLYEHSDPREGYHQDWNTLIYNYGRREVSNYLVGNALYWIERFGIDALRVDAVASMIYRDYSRKAGEWIPNEYGGRENLEAIEFLRNTNRILGEQTPGAVTMAEESTDFAGVTRPPAGGGLGFWFKWNLGWMHDTLDYMKLDPVHRRYHHDKMTFGMLYNYTENFVLPLSHDEVVHGKKSILDRMPGDAWQKFANLRAYYGWLFAFPGKKLLFMGNEFAQGREWNHDVSLDWHLLEGGDNWHHGVQRLVRDLNHTYRHHKALHELDFDPYGFEWLVVDDHERSVFVFVRRDRAGNEIIVASNFTPVPRHDYRFGINQPGRWREALNTDSMHYHGSNQGNGGVVESDAIASHGREHSLSLTLPPLATIWLVREAQ.

Aspartate 405 (nucleophile) is an active-site residue. Glutamate 458 functions as the Proton donor in the catalytic mechanism.

This sequence belongs to the glycosyl hydrolase 13 family. GlgB subfamily. As to quaternary structure, monomer.

The catalysed reaction is Transfers a segment of a (1-&gt;4)-alpha-D-glucan chain to a primary hydroxy group in a similar glucan chain.. It participates in glycan biosynthesis; glycogen biosynthesis. In terms of biological role, catalyzes the formation of the alpha-1,6-glucosidic linkages in glycogen by scission of a 1,4-alpha-linked oligosaccharide from growing alpha-1,4-glucan chains and the subsequent attachment of the oligosaccharide to the alpha-1,6 position. The chain is 1,4-alpha-glucan branching enzyme GlgB from Klebsiella pneumoniae subsp. pneumoniae (strain ATCC 700721 / MGH 78578).